Consider the following 435-residue polypeptide: ATP-dependent protease ATPase subunit HslU (435 aa).

ATP is bound by residues isoleucine 18, 60-65 (GVGKTE), aspartate 248, glutamate 313, and arginine 385.

This sequence belongs to the ClpX chaperone family. HslU subfamily. In terms of assembly, a double ring-shaped homohexamer of HslV is capped on each side by a ring-shaped HslU homohexamer. The assembly of the HslU/HslV complex is dependent on binding of ATP.

The protein resides in the cytoplasm. Its function is as follows. ATPase subunit of a proteasome-like degradation complex; this subunit has chaperone activity. The binding of ATP and its subsequent hydrolysis by HslU are essential for unfolding of protein substrates subsequently hydrolyzed by HslV. HslU recognizes the N-terminal part of its protein substrates and unfolds these before they are guided to HslV for hydrolysis. The protein is ATP-dependent protease ATPase subunit HslU of Rhizobium meliloti (strain 1021) (Ensifer meliloti).